The chain runs to 605 residues: ABC transporter E family member 2 (605 aa).

Residues 46–75 (KLAFISEELCIGCGICVKKCPFEAIQIINL) form the 4Fe-4S ferredoxin-type domain. ABC transporter domains are found at residues 70–315 (IQII…FLAG) and 344–568 (IQSY…LSHL). ATP is bound by residues 110–117 (GTNGIGKS) and 381–388 (GENGTGKT).

Belongs to the ABC transporter superfamily. ABCE family. In terms of tissue distribution, expressed in roots, stems, leaves, flowers and siliques.

It localises to the membrane. This Arabidopsis thaliana (Mouse-ear cress) protein is ABC transporter E family member 2 (ABCE2).